An 801-amino-acid chain; its full sequence is Potassium transporter 1 (801 aa).

The interval 1–20 (MSSALEVEGSGSPGVEPAAT) is disordered. The Cytoplasmic segment spans residues 1-57 (MSSALEVEGSGSPGVEPAATATASRLKRHDSLFGDAEKVSGGKHHGGSAVSWAVTLH). A helical transmembrane segment spans residues 58 to 80 (LAFQSVGIIYGDIGTSPLYVYSS). Topologically, residues 81–94 (TFPDGIGHRDDLVG) are extracellular. The chain crosses the membrane as a helical span at residues 95-115 (VLSLILYTLIIIPMLKYVFIV). Over 116–181 (LYANDNGDGG…HKLESSRAAK (66 aa)) the chain is Cytoplasmic. The chain crosses the membrane as a helical span at residues 182–202 (MALFFLTILGTSMVMGDGTLT). Residues 203 to 219 (PAISVLSAVSGIREKAP) lie on the Extracellular side of the membrane. Residues 220-240 (NLTQTQVVLISVAILFMLFSV) traverse the membrane as a helical segment. At 241–247 (QRFGTDK) the chain is on the cytoplasmic side. A helical membrane pass occupies residues 248–268 (VGYTFAPIISVWFLLIAGIGL). The Extracellular portion of the chain corresponds to 269–298 (YNLVVHEITILKAFNPWYIVQYFRRNGKKG). A helical transmembrane segment spans residues 299–319 (WVSLGGVVLCVTGTEGMFADL). At 320 to 328 (GHFNIRAVQ) the chain is on the cytoplasmic side. A helical membrane pass occupies residues 329–349 (ISFNCILFPSVALCYIGQAAY). Over 350–375 (LRKFPENVSDTFYKSIPGKYRDRLNF) the chain is Extracellular. The helical transmembrane segment at 376–398 (GPLFWPTFIVAILAAIIASQAML) threads the bilayer. The Cytoplasmic portion of the chain corresponds to 399–429 (SGAFAILSKALSLGCLPRVRVIHTSKKYEGQ). The chain crosses the membrane as a helical span at residues 430–450 (VYIPEVNFMMGLASIIVTIAF). Over 451–461 (RTTTSIGNAYG) the chain is Extracellular. Residues 462–482 (ICVVTTFMVTTHLMTVVMLLI) form a helical membrane-spanning segment. Over 483–487 (WKKHL) the chain is Cytoplasmic. Residues 488-508 (VFILLFYCVFGFTEVVYLSSI) form a helical membrane-spanning segment. Residues 509-511 (LSK) lie on the Extracellular side of the membrane. The helical transmembrane segment at 512–532 (FVDGGYLPFCFAMVLMTMMAT) threads the bilayer. Residues 533–801 (WHYVHVRRYW…LLKVGITYEI (269 aa)) lie on the Cytoplasmic side of the membrane. The interval 679-728 (DDDDEAAARPRRSTSSAVHSEEAIQAASSGRTTASSVQLQAGGEPPAAMD) is disordered. Positions 704–717 (AASSGRTTASSVQL) are enriched in polar residues.

This sequence belongs to the HAK/KUP transporter (TC 2.A.72.3) family. In terms of tissue distribution, expressed almost exclusively in roots.

The protein localises to the cell membrane. High-affinity potassium transporter. Also transports rubidium, with the same affinity and cesium, with a lower affinity. This Oryza sativa subsp. japonica (Rice) protein is Potassium transporter 1 (HAK1).